We begin with the raw amino-acid sequence, 370 residues long: Gametogenetin-binding protein 1 (370 aa).

Disordered stretches follow at residues 26–114 (VGSK…QTLT) and 240–263 (PAAP…EEAV). Residues 31-49 (GSKSTNKPLTRSQPSSSWE) are compositionally biased toward polar residues. The required for induction of mitochondrial fragmentation stretch occupies residues 225–370 (LYKQLQKSAM…DEMGNWPPPD (146 aa)). The span at 250 to 260 (GLPHEEKGERE) shows a compositional bias: basic and acidic residues. Residues 298–370 (KKFRSTDTVG…DEMGNWPPPD (73 aa)) form an interaction with GGN region.

As to quaternary structure, interacts with CCDC159. Interacts with isoform 1 and isoform 2 of GGN. In terms of tissue distribution, testis-specific. In the testis, expressed only in germ cells and not in somatic cells. Expression starts in late primary spermatocytes in stage X-XII tubules and gradually increases towards step 1-3 spermatids in stage I-III tubules. Expression then declines continuously and disappears after step 7 spermatids in stage VII tubules (at protein level).

It is found in the cytoplasm. The protein resides in the membrane. Its subcellular location is the golgi apparatus. It localises to the mitochondrion intermembrane space. Induces mitochondrial fragmentation, possibly by promoting DNM1L-dependent fission and may play a role in mitochondrial morphogenesis during spermatogenesis. The protein is Gametogenetin-binding protein 1 (Ggnbp1) of Mus musculus (Mouse).